A 60-amino-acid polypeptide reads, in one-letter code: UPF0434 protein KPN78578_09190 (60 aa).

It belongs to the UPF0434 family.

The chain is UPF0434 protein KPN78578_09190 from Klebsiella pneumoniae subsp. pneumoniae (strain ATCC 700721 / MGH 78578).